Consider the following 130-residue polypeptide: Methylglyoxal synthase (130 aa).

In terms of domain architecture, MGS-like spans 1–130; sequence MSKPRIALIA…DLARNMQDVC (130 aa). Substrate is bound by residues His-11, Lys-15, 37 to 40, and 57 to 58; these read TGTT and SG. Asp-63 functions as the Proton donor/acceptor in the catalytic mechanism. Substrate is bound at residue His-90.

It belongs to the methylglyoxal synthase family.

The enzyme catalyses dihydroxyacetone phosphate = methylglyoxal + phosphate. In terms of biological role, catalyzes the formation of methylglyoxal from dihydroxyacetone phosphate. This chain is Methylglyoxal synthase, found in Burkholderia cenocepacia (strain HI2424).